Consider the following 465-residue polypeptide: Phenylalanine--tRNA ligase alpha subunit (465 aa).

Thr311 and Phe389 together coordinate L-phenylalanine. Glu391 provides a ligand contact to Mg(2+).

It belongs to the class-II aminoacyl-tRNA synthetase family. Phe-tRNA synthetase alpha subunit type 2 subfamily. As to quaternary structure, tetramer of two alpha and two beta subunits. Mg(2+) serves as cofactor.

It is found in the cytoplasm. The catalysed reaction is tRNA(Phe) + L-phenylalanine + ATP = L-phenylalanyl-tRNA(Phe) + AMP + diphosphate + H(+). This is Phenylalanine--tRNA ligase alpha subunit from Metallosphaera sedula (strain ATCC 51363 / DSM 5348 / JCM 9185 / NBRC 15509 / TH2).